The sequence spans 609 residues: Replication factor A protein 1 (609 aa).

A compositionally biased stretch (polar residues) spans Q130 to G152. The segment at Q130–M166 is disordered. The segment at residues W192–D278 is a DNA-binding region (OB). Residues C477–C498 form a C4-type zinc finger.

It belongs to the replication factor A protein 1 family. As to quaternary structure, component of the heterotrimeric canonical replication protein A complex (RPA).

The protein resides in the nucleus. Its function is as follows. As part of the replication protein A (RPA/RP-A), a single-stranded DNA-binding heterotrimeric complex, may play an essential role in DNA replication, recombination and repair. Binds and stabilizes single-stranded DNA intermediates, preventing complementary DNA reannealing and recruiting different proteins involved in DNA metabolism. This is Replication factor A protein 1 (ssb1) from Schizosaccharomyces pombe (strain 972 / ATCC 24843) (Fission yeast).